The following is a 415-amino-acid chain: uncharacterized protein (415 aa).

This is an uncharacterized protein from Rickettsia prowazekii (strain Madrid E).